The following is a 364-amino-acid chain: Autophagy-related protein 14 (364 aa).

The cysteine repeats stretch occupies residues 5–20; it reads CPICETQSHVFYCAHC. A coiled-coil region spans residues 38–114; that stretch reads LGKINNALRN…QDRRIKEKSR (77 aa).

This sequence belongs to the ATG14 family. As to quaternary structure, component of the autophagy-specific VPS34 PI3-kinase complex I composed of VPS15, VPS30, VPS34, ATG14 and ATG38. Interacts directly with ATG38.

It is found in the preautophagosomal structure membrane. The protein localises to the vacuole membrane. Functionally, required for cytoplasm to vacuole transport (Cvt) and autophagy as a part of the autophagy-specific VPS34 PI3-kinase complex I. This complex is essential to recruit the ATG8-phosphatidylinositol conjugate and the ATG12-ATG5 conjugate to the pre-autophagosomal structure. ATG14 mediates the specific binding of the VPS34 PI3-kinase complex I to the preautophagosomal structure (PAS). Required for survival and/or proliferation in kidneys and in brain. The protein is Autophagy-related protein 14 of Candida glabrata (strain ATCC 2001 / BCRC 20586 / JCM 3761 / NBRC 0622 / NRRL Y-65 / CBS 138) (Yeast).